A 460-amino-acid polypeptide reads, in one-letter code: Bifunctional protein GlmU (460 aa).

A pyrophosphorylase region spans residues 1–229 (MTNYAIILAA…FNESLGVNDR (229 aa)). Residues 8–11 (LAAG), Lys22, Gln72, and 77–78 (GT) contribute to the UDP-N-acetyl-alpha-D-glucosamine site. Asp102 contributes to the Mg(2+) binding site. UDP-N-acetyl-alpha-D-glucosamine-binding residues include Gly139, Glu154, Asn169, and Asn227. Asn227 contacts Mg(2+). Positions 230–250 (VALATAETVMRQRITQKHMVN) are linker. Positions 251–460 (GVTFQNPETV…RLAHHPSRSK (210 aa)) are N-acetyltransferase. UDP-N-acetyl-alpha-D-glucosamine contacts are provided by Arg332 and Lys350. Residue His362 is the Proton acceptor of the active site. UDP-N-acetyl-alpha-D-glucosamine-binding residues include Tyr365 and Asn376. Acetyl-CoA contacts are provided by residues Ala379, 385-386 (NY), Ser404, Ala422, and Arg439.

The protein in the N-terminal section; belongs to the N-acetylglucosamine-1-phosphate uridyltransferase family. In the C-terminal section; belongs to the transferase hexapeptide repeat family. Homotrimer. It depends on Mg(2+) as a cofactor.

It localises to the cytoplasm. The enzyme catalyses alpha-D-glucosamine 1-phosphate + acetyl-CoA = N-acetyl-alpha-D-glucosamine 1-phosphate + CoA + H(+). The catalysed reaction is N-acetyl-alpha-D-glucosamine 1-phosphate + UTP + H(+) = UDP-N-acetyl-alpha-D-glucosamine + diphosphate. It participates in nucleotide-sugar biosynthesis; UDP-N-acetyl-alpha-D-glucosamine biosynthesis; N-acetyl-alpha-D-glucosamine 1-phosphate from alpha-D-glucosamine 6-phosphate (route II): step 2/2. It functions in the pathway nucleotide-sugar biosynthesis; UDP-N-acetyl-alpha-D-glucosamine biosynthesis; UDP-N-acetyl-alpha-D-glucosamine from N-acetyl-alpha-D-glucosamine 1-phosphate: step 1/1. The protein operates within bacterial outer membrane biogenesis; LPS lipid A biosynthesis. Catalyzes the last two sequential reactions in the de novo biosynthetic pathway for UDP-N-acetylglucosamine (UDP-GlcNAc). The C-terminal domain catalyzes the transfer of acetyl group from acetyl coenzyme A to glucosamine-1-phosphate (GlcN-1-P) to produce N-acetylglucosamine-1-phosphate (GlcNAc-1-P), which is converted into UDP-GlcNAc by the transfer of uridine 5-monophosphate (from uridine 5-triphosphate), a reaction catalyzed by the N-terminal domain. The sequence is that of Bifunctional protein GlmU from Streptococcus pyogenes serotype M6 (strain ATCC BAA-946 / MGAS10394).